A 373-amino-acid chain; its full sequence is Ferroptosis suppressor protein 1 (373 aa).

Residue G2 is the site of N-myristoyl glycine attachment. Residues 7 to 27 (VDTGAVHVVIVGGGFGGIAAA) traverse the membrane as a helical segment. Residues 18-22 (GGGFG), R54, and V82 contribute to the 6-hydroxy-FAD site. K168 is subject to N6-acetyllysine. D285 is a 6-hydroxy-FAD binding site.

It belongs to the FAD-dependent oxidoreductase family. As to quaternary structure, interacts with importin subunits KPNA2 and IPO5; this interaction likely mediates the translocation into the nucleus upon oxidative stress. 6-hydroxy-FAD serves as cofactor. N-myristoylation at Gly-2 mediates the recruitment to lipid droplets and plasma membrane. Post-translationally, acetylation at Lys-168 prevents AIFM2 ubiquitination and degradation, thereby inhibiting ferroptosis. KAT2B mediates acetylation at Lys-168, while HDAC3 removes it. In terms of processing, ubiquitinated. AIFM2 undergoes 'Lys-29'-ubiquitination and proteasomal degradation, which is inhibited by acetylation at Lys-168. Detected in most normal tissues as two transcripts of 1.8 and 4.0 kb in length, respectively. Highly expressed in liver, testis, and kidney, and expressed at lower levels in pancreas, spleen, brain and lung. Expressed in heart (at protein level).

The protein resides in the lipid droplet. It localises to the cell membrane. Its subcellular location is the cytoplasm. It is found in the mitochondrion membrane. The protein localises to the nucleus. It catalyses the reaction ubiquinone-10 + NADH + H(+) = ubiquinol-10 + NAD(+). It carries out the reaction phylloquinone + NADH + H(+) = phylloquinol + NAD(+). The catalysed reaction is menaquinone-4 + NADH + H(+) = menaquinol-4 + NAD(+). The enzyme catalyses menadione + NADH + H(+) = menadiol + NAD(+). Its activity is regulated as follows. The modification by 4-hydroxy-2-nonenal (HNE) adduction in mitochondria results in loss of the oxidoreductase activity and activation of a novel function in mitochondrial oxidative stress signaling. In terms of biological role, a NAD(P)H-dependent oxidoreductase that acts as a key inhibitor of ferroptosis. At the plasma membrane, catalyzes reduction of coenzyme Q/ubiquinone-10 to ubiquinol-10, a lipophilic radical-trapping antioxidant that prevents lipid oxidative damage and consequently ferroptosis. Acts in parallel to GPX4 to suppress phospholipid peroxidation and ferroptosis. This anti-ferroptotic function is independent of cellular glutathione levels. Also acts as a potent radical-trapping antioxidant by mediating warfarin-resistant vitamin K reduction in the canonical vitamin K cycle: catalyzes NAD(P)H-dependent reduction of vitamin K (phylloquinone, menaquinone-4 and menadione) to hydroquinone forms. Hydroquinones act as potent radical-trapping antioxidants inhibitor of phospholipid peroxidation and ferroptosis. May play a role in mitochondrial stress signaling. Upon oxidative stress, associates with the lipid peroxidation end product 4-hydroxy-2-nonenal (HNE) forming a lipid adduct devoid of oxidoreductase activity, which then translocates from mitochondria into the nucleus triggering DNA damage and cell death. This is Ferroptosis suppressor protein 1 from Mus musculus (Mouse).